Here is a 290-residue protein sequence, read N- to C-terminus: Protein CREG2 (290 aa).

Residues 1–31 (MSVRRGRRPARPGTRLSWLLCCSALLSPAAG) form the signal peptide. 2 N-linked (GlcNAc...) asparagine glycosylation sites follow: asparagine 165 and asparagine 166.

It belongs to the CREG family. Post-translationally, it is not sure whether N-glycosylation is on Asn-165 and/or Asn-166. In terms of tissue distribution, brain specific mainly in the limbic system and faintly in the spinal cord but not in cerebellum.

The protein resides in the secreted. This Homo sapiens (Human) protein is Protein CREG2 (CREG2).